Reading from the N-terminus, the 388-residue chain is Probable proton-coupled zinc antiporter SLC30A3 (388 aa).

Polar residues predominate over residues 1–13; that stretch reads MEPSPTTGGSETT. 2 disordered regions span residues 1 to 30 and 35 to 54; these read MEPS…GLRL and TEAP…SFHH. Residues 1–75 lie on the Cytoplasmic side of the membrane; that stretch reads MEPSPTTGGS…TPERMQAQRQ (75 aa). The chain crosses the membrane as a helical span at residues 76 to 96; that stretch reads LCTACAVCCVFMAGEVVGGYL. Topologically, residues 97–105 are lumenal; sequence AHSLAIMTD. The chain crosses the membrane as a helical span at residues 106 to 126; the sequence is AAHLLADVGSMMGSLFSLWLS. Residues His108 and Asp112 each contribute to the Zn(2+) site. Residues 127–145 are Cytoplasmic-facing; it reads TRPATRTMTFGWHRSETLG. Residues 146-166 traverse the membrane as a helical segment; that stretch reads ALASVVSLWMVTGILLYLAFI. Over 167-177 the chain is Lumenal; it reads RLLHSDYHIEG. A helical membrane pass occupies residues 178–198; it reads GAMLLTASIAVCANLLMAFVL. Over 199 to 235 the chain is Cytoplasmic; the sequence is HQAGPPHSHGSRGAEYAPLEEGSGEPLPLGNTSVRAA. Residues 236-256 form a helical membrane-spanning segment; sequence FVHVLGDLLQSLGVLIASILI. Positions 238 and 242 each coordinate Zn(2+). Residues 257 to 264 are Lumenal-facing; it reads YFKPQYKA. Residues 265–285 traverse the membrane as a helical segment; it reads ADPISTFLFSICALGSTAPTL. The Cytoplasmic portion of the chain corresponds to 286–388; the sequence is RDVLRVLMEG…CLRCQEPPQA (103 aa).

This sequence belongs to the cation diffusion facilitator (CDF) transporter (TC 2.A.4) family. SLC30A subfamily. As to quaternary structure, homodimer. Homodimerization could regulate efficiency of zinc transport. Interacts with TMEM163.

Its subcellular location is the cytoplasmic vesicle. The protein resides in the secretory vesicle. It is found in the synaptic vesicle membrane. It localises to the synapse. The protein localises to the synaptosome. Its subcellular location is the late endosome membrane. The protein resides in the lysosome membrane. The catalysed reaction is Zn(2+)(in) + 2 H(+)(out) = Zn(2+)(out) + 2 H(+)(in). In terms of biological role, probable proton-coupled zinc ion antiporter mediating the import of zinc from cytoplasm into synaptic vesicles and participating to cellular zinc ion homeostasis in the brain. In Bos taurus (Bovine), this protein is Probable proton-coupled zinc antiporter SLC30A3.